We begin with the raw amino-acid sequence, 567 residues long: MLERRCRGPLAMGLAQPRLLSGPSQESPQTLGKESRGLRQQGTSVAQSGAQAPGRAHRCAHCRRHFPGWVALWLHTRRCQARLPLPCPECGRRFRHAPFLALHRQVHAAATPDLGFACHLCGQSFRGWVALVLHLRAHSAAKRPIACPKCERRFWRRKQLRAHLRRCHPPAPEARPFICGNCGRSFAQWDQLVAHKRVHVAEALEEAAAKALGPRPRGRPAVTAPRPGGDAVDRPFQCACCGKRFRHKPNLIAHRRVHTGERPHQCPECGKRFTNKPYLTSHRRIHTGEKPYPCKECGRRFRHKPNLLSHSKIHKRSEGSAQAAPGPGSPQLPAGPQESAAEPTPAVPLKPAQEPPPGAPPEHPQDPIEAPPSLYSCDDCGRSFRLERFLRAHQRQHTGERPFTCAECGKNFGKKTHLVAHSRVHSGERPFACEECGRRFSQGSHLAAHRRDHAPDRPFVCPDCGKAFRHKPYLAAHRRIHTGEKPYVCPDCGKAFSQKSNLVSHRRIHTGERPYACPDCDRSFSQKSNLITHRKSHIRDGAFCCAICGQTFDDEERLLAHQKKHDV.

The tract at residues 17-52 is disordered; that stretch reads PRLLSGPSQESPQTLGKESRGLRQQGTSVAQSGAQA. A compositionally biased stretch (polar residues) spans 22-50; the sequence is GPSQESPQTLGKESRGLRQQGTSVAQSGA. Ser27 is subject to Phosphoserine. A Phosphothreonine modification is found at Thr30. At Lys33 the chain carries N6-acetyllysine. The C2H2-type 1; atypical zinc finger occupies 57–79; the sequence is HRCAHCRRHFPGWVALWLHTRRC. 7 consecutive C2H2-type zinc fingers follow at residues 85-107, 116-138, 145-168, 177-199, 236-258, 264-286, and 292-314; these read LPCPECGRRFRHAPFLALHRQVH, FACHLCGQSFRGWVALVLHLRAH, IACPKCERRFWRRKQLRAHLRRCH, FICGNCGRSFAQWDQLVAHKRVH, FQCACCGKRFRHKPNLIAHRRVH, HQCPECGKRFTNKPYLTSHRRIH, and YPCKECGRRFRHKPNLLSHSKIH. Lys276 carries the N6-acetyllysine modification. Over residues 305 to 315 the composition is skewed to basic residues; that stretch reads PNLLSHSKIHK. The interval 305–372 is disordered; it reads PNLLSHSKIH…HPQDPIEAPP (68 aa). Residues 345–362 show a composition bias toward pro residues; it reads PAVPLKPAQEPPPGAPPE. 7 C2H2-type zinc fingers span residues 375–397, 403–425, 431–453, 459–481, 487–509, 515–537, and 543–565; these read YSCDDCGRSFRLERFLRAHQRQH, FTCAECGKNFGKKTHLVAHSRVH, FACEECGRRFSQGSHLAAHRRDH, FVCPDCGKAFRHKPYLAAHRRIH, YVCPDCGKAFSQKSNLVSHRRIH, YACPDCDRSFSQKSNLITHRKSH, and FCCAICGQTFDDEERLLAHQKKH.

As to quaternary structure, homodimers and homomultimers. Found in a complex with RIP60 and RIP100. In terms of tissue distribution, expressed in adipose tissue and bone tissue.

The protein resides in the nucleus. The protein localises to the cytoplasm. It is found in the cytosol. Sequence-specific double-stranded DNA-binding protein. Binds ATT-rich and T-rich DNA sequences and facilitates DNA bending. May regulate the expression of genes involved in cellular fatty acid import, including SCARB1/CD36, and genes involved in lipid droplet formation. May regulate the expression of LCN2, and thereby influence iron metabolism and apoptosis-related pathways. May regulate the expression of genes involved in glucose transport. The sequence is that of DNA-binding protein REPIN1 (REPIN1) from Homo sapiens (Human).